The sequence spans 160 residues: Putative 4-hydroxy-4-methyl-2-oxoglutarate aldolase (160 aa).

Substrate is bound by residues 78-81 (GDVI) and Arg100. Residue Asp101 participates in a divalent metal cation binding.

The protein belongs to the class II aldolase/RraA-like family. In terms of assembly, homotrimer. The cofactor is a divalent metal cation.

The catalysed reaction is 4-hydroxy-4-methyl-2-oxoglutarate = 2 pyruvate. The enzyme catalyses oxaloacetate + H(+) = pyruvate + CO2. Its function is as follows. Catalyzes the aldol cleavage of 4-hydroxy-4-methyl-2-oxoglutarate (HMG) into 2 molecules of pyruvate. Also contains a secondary oxaloacetate (OAA) decarboxylase activity due to the common pyruvate enolate transition state formed following C-C bond cleavage in the retro-aldol and decarboxylation reactions. The chain is Putative 4-hydroxy-4-methyl-2-oxoglutarate aldolase from Mycolicibacterium paratuberculosis (strain ATCC BAA-968 / K-10) (Mycobacterium paratuberculosis).